The chain runs to 314 residues: Probable cell division protein WhiA (314 aa).

The segment at residues 274 to 308 (SLKELGEMMSTGKISKSGVNHRLRKLNEMADKLRS) is a DNA-binding region (H-T-H motif).

The protein belongs to the WhiA family.

In terms of biological role, involved in cell division and chromosome segregation. The sequence is that of Probable cell division protein WhiA from Staphylococcus saprophyticus subsp. saprophyticus (strain ATCC 15305 / DSM 20229 / NCIMB 8711 / NCTC 7292 / S-41).